We begin with the raw amino-acid sequence, 88 residues long: Large ribosomal subunit protein bL27 (88 aa).

The segment covering 1 to 13 (MATKKSGGSSSNG) has biased composition (low complexity). The disordered stretch occupies residues 1–24 (MATKKSGGSSSNGRDSRGRRLGVK).

It belongs to the bacterial ribosomal protein bL27 family.

In Ehrlichia ruminantium (strain Gardel), this protein is Large ribosomal subunit protein bL27.